Reading from the N-terminus, the 483-residue chain is V-type proton ATPase subunit H (483 aa).

S483 is subject to Phosphoserine.

This sequence belongs to the V-ATPase H subunit family. V-ATPase is a heteromultimeric enzyme made up of two complexes: the ATP-hydrolytic V1 complex and the proton translocation V0 complex. The V1 complex consists of three catalytic AB heterodimers that form a heterohexamer, three peripheral stalks each consisting of EG heterodimers, one central rotor including subunits D and F, and the regulatory subunits C and H. The proton translocation complex V0 consists of the proton transport subunit a, a ring of proteolipid subunits c9c'', rotary subunit d, subunits e and f, and the accessory subunits ATP6AP1/Ac45 and ATP6AP2/PRR. Interacts with AP2M1. In terms of tissue distribution, expressed in brain (at protein level).

It is found in the cytoplasmic vesicle. The protein resides in the clathrin-coated vesicle membrane. Functionally, subunit of the V1 complex of vacuolar(H+)-ATPase (V-ATPase), a multisubunit enzyme composed of a peripheral complex (V1) that hydrolyzes ATP and a membrane integral complex (V0) that translocates protons. V-ATPase is responsible for acidifying and maintaining the pH of intracellular compartments and in some cell types, is targeted to the plasma membrane, where it is responsible for acidifying the extracellular environment. Subunit H is essential for V-ATPase activity, but not for the assembly of the complex. Involved in the endocytosis mediated by clathrin-coated pits, required for the formation of endosomes. This Bos taurus (Bovine) protein is V-type proton ATPase subunit H (ATP6V1H).